A 527-amino-acid chain; its full sequence is MEMDMDIIRKAIAATIFALVMAWAWRVLDWAWFTPKRIEKRLRQQGFRGNPYRFLVGDVKESGKMHQEALSNPMEFDNDIVPRLMPHINHTIKTYGRNSFTWMGRIPRIHVMEPELIKEVLTHSSKYQKNFDVHNPLVKFLLTGVGSFEGAKWSKHRRIISPAFTLEKLKSMLPAFAICYHDMLTKWEKLAEKEGSHEVDIFPTFDVLTSDVISKVAFGSTYDEGGKIFRLLKELMDLTIDCMRDVYIPGWSYLPTKRNKRMKEINKEITDMLRFIINKRMKALKAGEPGEDDLLGVLLESNIQEIQKQGNRKDGGMTINDVIEECKLFYFAGQETTGVLLTWTTILLSKHPEWQERAREEVLQAFGKNKPEFERLNHLKYVSMILYEVLRLYPPVIDLTKIIHEDTKLGPYTIPAGTQVMLPTVMLHREKSIWGEDAMEFNPMRFADGVANATKNNVTYLPFSWGPRVCLGQNFALLQAKLGLAMILQRFKFDVAPSYVHAPFTILTVQPQFGSHVIYKKLERQNF.

The Lumenal portion of the chain corresponds to 1-11; that stretch reads MEMDMDIIRKA. A helical transmembrane segment spans residues 12-32; the sequence is IAATIFALVMAWAWRVLDWAW. At 33-527 the chain is on the cytoplasmic side; sequence FTPKRIEKRL…IYKKLERQNF (495 aa). Residue Cys470 coordinates heme.

The protein belongs to the cytochrome P450 family. Heme is required as a cofactor. As to expression, expressed in leaves (especially in leaf epidermis), and, to a lower extent, in roots, stems, flower buds and flowers.

It is found in the endoplasmic reticulum membrane. The catalysed reaction is loganin + reduced [NADPH--hemoprotein reductase] + O2 = secologanin + oxidized [NADPH--hemoprotein reductase] + 2 H2O + H(+). It carries out the reaction secologanin + reduced [NADPH--hemoprotein reductase] + O2 = secoxyloganin + oxidized [NADPH--hemoprotein reductase] + H2O + 2 H(+). Its pathway is alkaloid biosynthesis. In terms of biological role, component of the seco-iridoid and derivatives monoterpenoid indole alkaloids (MIAs, e.g. secologanin) biosynthesis pathway. Catalyzes the conversion of loganin into secologanin. Catalyzes the conversion of secologanin into secoxyloganin. The protein is Secologanin synthase 2 of Catharanthus roseus (Madagascar periwinkle).